Reading from the N-terminus, the 165-residue chain is Large ribosomal subunit protein uL10 (165 aa).

Belongs to the universal ribosomal protein uL10 family. As to quaternary structure, part of the ribosomal stalk of the 50S ribosomal subunit. The N-terminus interacts with L11 and the large rRNA to form the base of the stalk. The C-terminus forms an elongated spine to which L12 dimers bind in a sequential fashion forming a multimeric L10(L12)X complex.

Forms part of the ribosomal stalk, playing a central role in the interaction of the ribosome with GTP-bound translation factors. The polypeptide is Large ribosomal subunit protein uL10 (Burkholderia ambifaria (strain MC40-6)).